Here is a 283-residue protein sequence, read N- to C-terminus: Thymidylate synthase (283 aa).

DUMP contacts are provided by residues Arg31 and Arg145–Arg146. The active-site Nucleophile is Cys165. DUMP contacts are provided by residues Arg185–Asp188, Asn196, and His226–Tyr228. Asp188 provides a ligand contact to (6R)-5,10-methylene-5,6,7,8-tetrahydrofolate. Ser282 is a binding site for (6R)-5,10-methylene-5,6,7,8-tetrahydrofolate.

The protein belongs to the thymidylate synthase family. Bacterial-type ThyA subfamily. In terms of assembly, homodimer.

The protein resides in the cytoplasm. It catalyses the reaction dUMP + (6R)-5,10-methylene-5,6,7,8-tetrahydrofolate = 7,8-dihydrofolate + dTMP. It functions in the pathway pyrimidine metabolism; dTTP biosynthesis. In terms of biological role, catalyzes the reductive methylation of 2'-deoxyuridine-5'-monophosphate (dUMP) to 2'-deoxythymidine-5'-monophosphate (dTMP) while utilizing 5,10-methylenetetrahydrofolate (mTHF) as the methyl donor and reductant in the reaction, yielding dihydrofolate (DHF) as a by-product. This enzymatic reaction provides an intracellular de novo source of dTMP, an essential precursor for DNA biosynthesis. This chain is Thymidylate synthase, found in Symbiobacterium thermophilum (strain DSM 24528 / JCM 14929 / IAM 14863 / T).